Consider the following 413-residue polypeptide: S-adenosylmethionine synthase (413 aa).

H15 contributes to the ATP binding site. Mg(2+) is bound at residue D17. K(+) is bound at residue E43. Residues E56 and Q100 each coordinate L-methionine. Residues 100-110 (QSPDISQGVNE) form a flexible loop region. Residues 171–173 (DGK), 248–249 (KF), D257, 263–264 (RK), A280, and K284 each bind ATP. D257 serves as a coordination point for L-methionine. Residue K288 coordinates L-methionine.

This sequence belongs to the AdoMet synthase family. As to quaternary structure, homotetramer; dimer of dimers. The cofactor is Mg(2+). K(+) is required as a cofactor.

It is found in the cytoplasm. The enzyme catalyses L-methionine + ATP + H2O = S-adenosyl-L-methionine + phosphate + diphosphate. Its pathway is amino-acid biosynthesis; S-adenosyl-L-methionine biosynthesis; S-adenosyl-L-methionine from L-methionine: step 1/1. In terms of biological role, catalyzes the formation of S-adenosylmethionine (AdoMet) from methionine and ATP. The overall synthetic reaction is composed of two sequential steps, AdoMet formation and the subsequent tripolyphosphate hydrolysis which occurs prior to release of AdoMet from the enzyme. The sequence is that of S-adenosylmethionine synthase from Prochlorococcus marinus subsp. pastoris (strain CCMP1986 / NIES-2087 / MED4).